A 198-amino-acid chain; its full sequence is Peptide deformylase (198 aa).

Fe cation is bound by residues cysteine 123 and histidine 170. Residue glutamate 171 is part of the active site. Residue histidine 174 participates in Fe cation binding.

It belongs to the polypeptide deformylase family. It depends on Fe(2+) as a cofactor.

The enzyme catalyses N-terminal N-formyl-L-methionyl-[peptide] + H2O = N-terminal L-methionyl-[peptide] + formate. Its function is as follows. Removes the formyl group from the N-terminal Met of newly synthesized proteins. Requires at least a dipeptide for an efficient rate of reaction. N-terminal L-methionine is a prerequisite for activity but the enzyme has broad specificity at other positions. This chain is Peptide deformylase, found in Mycoplasmopsis pulmonis (strain UAB CTIP) (Mycoplasma pulmonis).